The chain runs to 233 residues: NAD-dependent protein deacylase (233 aa).

One can recognise a Deacetylase sirtuin-type domain in the interval 1 to 230 (MKNIMILSGA…ALDIENFMKD (230 aa)). 9–28 (GAGLSAPSGLKTFRDNDGLW) provides a ligand contact to NAD(+). Tyrosine 53 and arginine 56 together coordinate substrate. 88–91 (QNVD) lines the NAD(+) pocket. Histidine 106 (proton acceptor) is an active-site residue. Residues cysteine 114, cysteine 117, cysteine 133, and cysteine 136 each coordinate Zn(2+). NAD(+)-binding positions include 172–174 (GTS) and 200–202 (NLE).

This sequence belongs to the sirtuin family. Class III subfamily. Zn(2+) is required as a cofactor.

The protein resides in the cytoplasm. The enzyme catalyses N(6)-acetyl-L-lysyl-[protein] + NAD(+) + H2O = 2''-O-acetyl-ADP-D-ribose + nicotinamide + L-lysyl-[protein]. It carries out the reaction N(6)-succinyl-L-lysyl-[protein] + NAD(+) + H2O = 2''-O-succinyl-ADP-D-ribose + nicotinamide + L-lysyl-[protein]. NAD-dependent lysine deacetylase and desuccinylase that specifically removes acetyl and succinyl groups on target proteins. Modulates the activities of several proteins which are inactive in their acylated form. In Campylobacter jejuni subsp. jejuni serotype O:2 (strain ATCC 700819 / NCTC 11168), this protein is NAD-dependent protein deacylase.